The following is a 279-amino-acid chain: Thymidylate synthase (279 aa).

Position 133 to 134 (133 to 134 (RR)) interacts with dUMP. Catalysis depends on Cys-154, which acts as the Nucleophile. DUMP-binding positions include 178-181 (RSND), Asn-189, and 219-221 (HIY). Asp-181 contributes to the (6R)-5,10-methylene-5,6,7,8-tetrahydrofolate binding site. (6R)-5,10-methylene-5,6,7,8-tetrahydrofolate is bound at residue Ala-278.

It belongs to the thymidylate synthase family. Bacterial-type ThyA subfamily. Homodimer.

It localises to the cytoplasm. The enzyme catalyses dUMP + (6R)-5,10-methylene-5,6,7,8-tetrahydrofolate = 7,8-dihydrofolate + dTMP. It participates in pyrimidine metabolism; dTTP biosynthesis. In terms of biological role, catalyzes the reductive methylation of 2'-deoxyuridine-5'-monophosphate (dUMP) to 2'-deoxythymidine-5'-monophosphate (dTMP) while utilizing 5,10-methylenetetrahydrofolate (mTHF) as the methyl donor and reductant in the reaction, yielding dihydrofolate (DHF) as a by-product. This enzymatic reaction provides an intracellular de novo source of dTMP, an essential precursor for DNA biosynthesis. The protein is Thymidylate synthase of Streptococcus mutans serotype c (strain ATCC 700610 / UA159).